The following is a 288-amino-acid chain: Syntaxin-1A (288 aa).

Residues 1-13 show a composition bias toward basic and acidic residues; it reads MKDRTQELRTAKD. Positions 1-20 are disordered; that stretch reads MKDRTQELRTAKDSDDDDDV. Residues 1–265 are Cytoplasmic-facing; the sequence is MKDRTQELRT…KYQSKARRKK (265 aa). S14, S64, and S95 each carry phosphoserine. Residues 68–109 are a coiled coil; the sequence is DEKTKEELEELMSDIKKTANKVRSKLKSIEQSIEQEEGLNRS. Residue S188 is modified to Phosphoserine; by DAPK1. The t-SNARE coiled-coil homology domain maps to 192–254; the sequence is LSEIETRHSE…ERAVSDTKKA (63 aa). Residues K252, K253, and K256 each participate in a glycyl lysine isopeptide (Lys-Gly) (interchain with G-Cter in SUMO) cross-link. The chain crosses the membrane as a helical; Anchor for type IV membrane protein span at residues 266 to 288; the sequence is IMIVICCVVLGIVIASTFGGIFG.

Belongs to the syntaxin family. In terms of assembly, part of the SNARE core complex containing SNAP25, VAMP2 and STX1A; this complex constitutes the basic catalytic machinery of the complex neurotransmitter release apparatus. The SNARE complex interacts with CPLX1. Interacts with STXBP1. The interaction with STXBP1 promotes assembly of the SNARE complex. Interacts (via C-terminus) with KCNB1 (via C-terminus); the interaction increases in a calcium-dependent manner and induces a pore-independent enhancement of exocytosis in neuroendocrine cells, chromaffin cells, pancreatic beta cells and from the soma of dorsal root ganglia (DRG) neurons. Interacts with SYTL4. Interacts with STXBP6. Interacts with PLCL1 (via C2 domain). Interacts with OTOF. Interacts with LGI3. Interacts (via the H3 domain) with SLC6A4 (via the N-terminus); this interaction regulates SLC4A6 channel conductance in thalamocortical neurons. Interacts with SYT6 and SYT8; the interaction is Ca(2+)-dependent. Interacts with VAMP8. Interacts with SNAP23. Interacts with VAPA and SYBU. Interacts with PRRT2. Interacts with SEPT8. Interacts with STXBP5L. Interacts with synaptotagmin-1/SYT1. Interacts with SEPTIN5; in the cerebellar cortex. Interacts with SEPTIN4; in the striatum. In terms of processing, phosphorylated by CK2. Phosphorylation at Ser-188 by DAPK1 significantly decreases its interaction with STXBP1. Post-translationally, sumoylated, sumoylation is required for regulation of synaptic vesicle endocytosis. (Microbial infection) Targeted and hydrolyzed by C.botulinum neurotoxin type C (BoNT/C) which inhibits neurotransmitter release. Probably hydrolyzes the 253-Lys-|-Ala-254 bond.

It is found in the cytoplasmic vesicle. Its subcellular location is the secretory vesicle. The protein localises to the synaptic vesicle membrane. The protein resides in the synapse. It localises to the synaptosome. It is found in the cell membrane. Functionally, plays an essential role in hormone and neurotransmitter calcium-dependent exocytosis and endocytosis. Part of the SNARE (Soluble NSF Attachment Receptor) complex composed of SNAP25, STX1A and VAMP2 which mediates the fusion of synaptic vesicles with the presynaptic plasma membrane. STX1A and SNAP25 are localized on the plasma membrane while VAMP2 resides in synaptic vesicles. The pairing of the three SNAREs from the N-terminal SNARE motifs to the C-terminal anchors leads to the formation of the SNARE complex, which brings membranes into close proximity and results in final fusion. Participates in the calcium-dependent regulation of acrosomal exocytosis in sperm. Also plays an important role in the exocytosis of hormones such as insulin or glucagon-like peptide 1 (GLP-1). The protein is Syntaxin-1A (STX1A) of Bos taurus (Bovine).